A 441-amino-acid chain; its full sequence is Protein translocase subunit SecY (441 aa).

10 consecutive transmembrane segments (helical) span residues 18-38 (ILFT…PSPG), 78-98 (AVGV…TVVI), 124-144 (IALA…GGLL), 157-177 (IFTL…VMWM), 180-200 (LITE…GIAA), 215-235 (GVVF…VVFV), 272-292 (VIPV…TQLI), 318-338 (LVYI…YVSI), 382-402 (IYLG…AGGT), and 403-423 (VQNL…GLDT).

It belongs to the SecY/SEC61-alpha family. Component of the Sec protein translocase complex. Heterotrimer consisting of SecY, SecE and SecG subunits. The heterotrimers can form oligomers, although 1 heterotrimer is thought to be able to translocate proteins. Interacts with the ribosome. Interacts with SecDF, and other proteins may be involved. Interacts with SecA.

The protein resides in the cell membrane. The central subunit of the protein translocation channel SecYEG. Consists of two halves formed by TMs 1-5 and 6-10. These two domains form a lateral gate at the front which open onto the bilayer between TMs 2 and 7, and are clamped together by SecE at the back. The channel is closed by both a pore ring composed of hydrophobic SecY resides and a short helix (helix 2A) on the extracellular side of the membrane which forms a plug. The plug probably moves laterally to allow the channel to open. The ring and the pore may move independently. The protein is Protein translocase subunit SecY of Mycobacterium bovis (strain ATCC BAA-935 / AF2122/97).